Reading from the N-terminus, the 205-residue chain is Dephospho-CoA kinase (205 aa).

The DPCK domain occupies 7-204; it reads LVGLTGGIGS…ARYLAAARAT (198 aa). 15-20 is a binding site for ATP; the sequence is GSGKSA.

Belongs to the CoaE family.

The protein localises to the cytoplasm. It carries out the reaction 3'-dephospho-CoA + ATP = ADP + CoA + H(+). It functions in the pathway cofactor biosynthesis; coenzyme A biosynthesis; CoA from (R)-pantothenate: step 5/5. In terms of biological role, catalyzes the phosphorylation of the 3'-hydroxyl group of dephosphocoenzyme A to form coenzyme A. The chain is Dephospho-CoA kinase from Aromatoleum aromaticum (strain DSM 19018 / LMG 30748 / EbN1) (Azoarcus sp. (strain EbN1)).